Here is a 440-residue protein sequence, read N- to C-terminus: Probable exopolygalacturonase C (440 aa).

Positions 1–19 are cleaved as a signal peptide; that stretch reads MSVFKASFLFLLSSSLVHG. N82 and N99 each carry an N-linked (GlcNAc...) asparagine glycan. PbH1 repeat units follow at residues 215–236, 238–259, and 265–288; these read GTNI…AVGA, SHDT…SIGS, and TDFA…YAAR. D229 (proton donor) is an active-site residue. H253 is a catalytic residue. 4 N-linked (GlcNAc...) asparagine glycosylation sites follow: N269, N301, N311, and N334. C387 and C393 are joined by a disulfide. N417 and N432 each carry an N-linked (GlcNAc...) asparagine glycan.

This sequence belongs to the glycosyl hydrolase 28 family.

The protein resides in the secreted. It catalyses the reaction [(1-&gt;4)-alpha-D-galacturonosyl](n) + H2O = alpha-D-galacturonate + [(1-&gt;4)-alpha-D-galacturonosyl](n-1). Specific in hydrolyzing the terminal glycosidic bond of polygalacturonic acid and oligogalacturonates. The chain is Probable exopolygalacturonase C (pgxC) from Aspergillus niger (strain ATCC MYA-4892 / CBS 513.88 / FGSC A1513).